Reading from the N-terminus, the 368-residue chain is Probable endopolygalacturonase I (368 aa).

The N-terminal stretch at 1–18 (MHSYQLLGLAAVGSLVSA) is a signal peptide. Positions 19–31 (APAPSRVSEFAKK) are excised as a propeptide. An intrachain disulfide couples C35 to C50. 3 PbH1 repeats span residues 140–161 (VEDSTFKGINIKNTPVQAISVQ), 162–192 (ATNVHLNDFTIDNSDGDDNGGHNTDGFDISE), and 193–214 (STGVYISGATVKNQDDCIAINS). D207 (proton donor) is an active-site residue. An intrachain disulfide couples C209 to C225. Residue H229 is part of the active site. PbH1 repeat units lie at residues 244 to 265 (VKNVTISDSTVSNSANGVRIKT), 273 to 295 (VSEITYSNIQLSGITDYGIVIEQ), and 307 to 352 (STGI…DLSG). An N-linked (GlcNAc...) asparagine glycan is attached at N246. 2 cysteine pairs are disulfide-bonded: C335–C340 and C359–C368.

It belongs to the glycosyl hydrolase 28 family.

The protein localises to the secreted. It carries out the reaction (1,4-alpha-D-galacturonosyl)n+m + H2O = (1,4-alpha-D-galacturonosyl)n + (1,4-alpha-D-galacturonosyl)m.. Involved in maceration and soft-rotting of plant tissue. Hydrolyzes the 1,4-alpha glycosidic bonds of de-esterified pectate in the smooth region of the plant cell wall. The polypeptide is Probable endopolygalacturonase I (pgaI) (Aspergillus niger (strain ATCC MYA-4892 / CBS 513.88 / FGSC A1513)).